A 912-amino-acid chain; its full sequence is WD repeat-containing protein 44 (912 aa).

A compositionally biased stretch (acidic residues) spans 1 to 14 (MASESDTEEFFDAP). Residues 1–25 (MASESDTEEFFDAPEDVHLEGGDPI) form a disordered region. Ala-2 bears the N-acetylalanine mark. Positions 2-170 (ASESDTEEFF…SSTAQLNVPE (169 aa)) are binding activity. At Ser-3 the chain carries Phosphoserine. The short motif at 9 to 15 (EFFDAPE) is the FFAT-like motif element. Residues Ser-50, Ser-66, Ser-71, Ser-81, Ser-96, and Ser-126 each carry the phosphoserine modification. 2 disordered regions span residues 79–104 (DDSL…GTEL) and 118–152 (QEDS…KPVD). Residues 89 to 104 (QSDQATASPVTAGTEL) are compositionally biased toward polar residues. Thr-158 is subject to Phosphothreonine. Disordered stretches follow at residues 183–202 (VKES…TKDF), 207–279 (EVAP…PKEN), 318–349 (QENG…ELTD), 396–422 (SNDA…RLKQ), and 457–479 (RDEV…MPYT). The tract at residues 210–256 (PAKPPRQLTPEPDIVASTKKPVPARPPPPANFPPPRPPPPSRPAPPP) is important for interaction with ARHGAP26 AND ARHGAP10. Phosphothreonine is present on Thr-218. Pro residues predominate over residues 232–255 (PARPPPPANFPPPRPPPPSRPAPP). At Ser-261 the chain carries Phosphoserine. The segment covering 261–277 (SELEFEALKTPDLDVPK) has biased composition (basic and acidic residues). The residue at position 270 (Thr-270) is a Phosphothreonine. Positions 333-346 (VMGPQRPRSNSGRE) are important for interaction with RAB11A. The tract at residues 334-504 (MGPQRPRSNS…DFDQIKVVQD (171 aa)) is interaction with RAB11. Phosphoserine is present on residues Ser-341 and Ser-343. Phosphothreonine is present on Thr-348. Phosphoserine is present on residues Ser-402, Ser-469, Ser-470, and Ser-471. A compositionally biased stretch (acidic residues) spans 466–475 (DDPSSSDDEG). Position 478 is a phosphotyrosine (Tyr-478). The WD 1 repeat unit spans residues 508 to 547 (EHMGAVWTMKFSHCGRLLASAGQDNVVRIWALKNAFDYFN). The disordered stretch occupies residues 556 to 592 (EGRVSPSPSQESLNSSKSDTDTGVCSGTDEDPDDKNA). Phosphoserine is present on residues Ser-560 and Ser-564. Residues 560–572 (SPSPSQESLNSSK) show a composition bias toward low complexity. WD repeat units lie at residues 604–642 (GHTA…CLCC), 644–684 (QHID…VALW), 689–728 (GQTK…YHTQ), 739–778 (KVGR…LSMK), 783–822 (VNSS…SKFT), and 871–912 (EDAE…KNLS).

In terms of assembly, interacts with the GTP-bound form of RAB11A when membrane-associated. Interacts with GRAF1/ARHGAP26 or GRAF2/ARHGAP10; the interaction connects the endoplasmic reticulum (ER) with the endosomal tubule. Interacts (via FFAT-like motif) with VAPA (via MSP domain) or VAPB (via MSP domain); the interaction connects the ER with the endosomal tubule. Does not bind to other Rab and Rho small G proteins. Post-translationally, phosphorylated by ATK1; the phosphorylation stabilizes its interaction with RAB11A and RAB11B. As to expression, highly expressed in brain.

The protein resides in the cytoplasm. It localises to the cytosol. Its subcellular location is the perinuclear region. The protein localises to the endosome membrane. It is found in the golgi apparatus. The protein resides in the trans-Golgi network. Functionally, downstream effector for Rab11 which regulates Rab11 intracellular membrane trafficking functions such as endocytic recycling, intracellular ciliogenesis and protein export. ATK1-mediated phosphorylation of WDR44 induces binding to Rab11 which activates endocytic recycling of transferrin receptor back to the plasma membrane. When bound to Rab11, prevents the formation of the ciliogenic Rab11-Rabin8/RAB3IP-RAB11FIP3 complex, therefore inhibiting preciliary trafficking and ciliogenesis. Participates in neo-synthesized protein export by connecting the endoplasmic reticulum (ER) with the endosomal tubule via direct interactions with the integral ER proteins VAPA or VAPB and the endosomal protein GRAFs (GRAF1/ARHGAP26 or GRAF2/ARHGAP10), which facilitates the transfer of proteins such as E-cadherin, MPP14 and CFTR into a Rab8-Rab10-Rab11-dependent export route. This is WD repeat-containing protein 44 (WDR44) from Bos taurus (Bovine).